We begin with the raw amino-acid sequence, 387 residues long: MASILQAIRYSHGKLAIIDQLQLPYVEKFITIRTSEDAWHAIKEMRVRGAPAIAIVAALALASELNTLIIHDKLSSRAEEVKLFIREKLDYLVSSRPTAVNLSDAARKLESTISGHADTPGATGRTVAEAFIRAAEEMMTKDLDDNMKIGQNGAEWIIKHALARHKSTATVLTHCNTGSLATSGYGTALGVIRSLASKKALEHAYCTETRPYNQGSRLTAFELVHDRLPATLITDSMVAALLASTKAEVDAIVVGADRVAANGDTANKIGTYGLAVLAKYHGVKFLVAAPLTTIDLGTKSGEDIVIEERPSAEVTKIRGPVDGDHPADIVKLETVHIAAKGIDVWNPAFDVTPSTLIDGIITEVGVIEKEADGQFHLERLFIDNSAS.

The active-site Proton donor is the Asp-257.

Belongs to the eIF-2B alpha/beta/delta subunits family. MtnA subfamily.

The protein localises to the cytoplasm. It is found in the nucleus. The catalysed reaction is 5-(methylsulfanyl)-alpha-D-ribose 1-phosphate = 5-(methylsulfanyl)-D-ribulose 1-phosphate. The protein operates within amino-acid biosynthesis; L-methionine biosynthesis via salvage pathway; L-methionine from S-methyl-5-thio-alpha-D-ribose 1-phosphate: step 1/6. Catalyzes the interconversion of methylthioribose-1-phosphate (MTR-1-P) into methylthioribulose-1-phosphate (MTRu-1-P). The chain is Methylthioribose-1-phosphate isomerase (mri1) from Aspergillus fumigatus (strain CBS 144.89 / FGSC A1163 / CEA10) (Neosartorya fumigata).